The chain runs to 377 residues: tRNA-specific 2-thiouridylase MnmA (377 aa).

ATP contacts are provided by residues alanine 18–serine 25 and methionine 44. Cysteine 113 (nucleophile) is an active-site residue. The cysteines at positions 113 and 210 are disulfide-linked. Position 137 (glycine 137) interacts with ATP. The interaction with tRNA stretch occupies residues arginine 159–glutamine 161. The active-site Cysteine persulfide intermediate is cysteine 210.

It belongs to the MnmA/TRMU family.

It is found in the cytoplasm. It carries out the reaction S-sulfanyl-L-cysteinyl-[protein] + uridine(34) in tRNA + AH2 + ATP = 2-thiouridine(34) in tRNA + L-cysteinyl-[protein] + A + AMP + diphosphate + H(+). Functionally, catalyzes the 2-thiolation of uridine at the wobble position (U34) of tRNA, leading to the formation of s(2)U34. The sequence is that of tRNA-specific 2-thiouridylase MnmA from Rhodospirillum rubrum (strain ATCC 11170 / ATH 1.1.1 / DSM 467 / LMG 4362 / NCIMB 8255 / S1).